The following is a 50-amino-acid chain: PMTKVLNAADISKALNAFEAPGSFDHKKFFQLVGLKGKTHEQVKKVFNIL.

Residues 38 to 50 (KTHEQVKKVFNIL) form the EF-hand domain.

This sequence belongs to the parvalbumin family.

Its function is as follows. Probably regulates the activity of the caudal neurosecretory system. Binds two calcium ions. This is Parvalbumin from Scyliorhinus canicula (Small-spotted catshark).